We begin with the raw amino-acid sequence, 37 residues long: Cytochrome b6-f complex subunit 5 (37 aa).

The chain crosses the membrane as a helical span at residues 5-25; the sequence is LLSGIVLGLIPITLAGLFVTA.

This sequence belongs to the PetG family. In terms of assembly, the 4 large subunits of the cytochrome b6-f complex are cytochrome b6, subunit IV (17 kDa polypeptide, PetD), cytochrome f and the Rieske protein, while the 4 small subunits are PetG, PetL, PetM and PetN. The complex functions as a dimer.

It is found in the plastid. The protein localises to the chloroplast thylakoid membrane. Its function is as follows. Component of the cytochrome b6-f complex, which mediates electron transfer between photosystem II (PSII) and photosystem I (PSI), cyclic electron flow around PSI, and state transitions. PetG is required for either the stability or assembly of the cytochrome b6-f complex. This Zygnema circumcarinatum (Green alga) protein is Cytochrome b6-f complex subunit 5.